The primary structure comprises 236 residues: V-set and transmembrane domain-containing protein 2A (236 aa).

Positions 1–24 (MMGIFLVYVGFVFFSVLYVQQGLS) are cleaved as a signal peptide. The region spanning 27–143 (AKFTEFPRNV…YGELQEHKAQ (117 aa)) is the Ig-like V-type domain. N-linked (GlcNAc...) asparagine glycosylation is present at asparagine 35. A disulfide bridge connects residues cysteine 48 and cysteine 127. N-linked (GlcNAc...) asparagine glycosylation is present at asparagine 175. Over residues 184 to 199 (IHGSANQRTHSTSSPQ) the composition is skewed to polar residues. Residues 184-206 (IHGSANQRTHSTSSPQVVAKIPK) form a disordered region.

In terms of assembly, homodimer. Post-translationally, N-glycosylated. N-linked glycosylation is critical for secretion but not for preadipocyte cell differentiation activity.

The protein localises to the secreted. Its function is as follows. Plays a role in the regulation of the early stage of white and brown preadipocyte cell differentiation. Promotes adipogenic commitment of preadipocytes by increasing gene expression of the transcription factor PPARG in a BMP4-dependent signaling pathway. In Homo sapiens (Human), this protein is V-set and transmembrane domain-containing protein 2A.